Reading from the N-terminus, the 391-residue chain is Probable dual-specificity RNA methyltransferase RlmN (391 aa).

Residues 1–33 (MTTPLDTPTREPLPLAPAGPGKLVMSAPRRGKP) form a disordered region. Low complexity predominate over residues 12–21 (PLPLAPAGPG). Catalysis depends on Glu124, which acts as the Proton acceptor. One can recognise a Radical SAM core domain in the interval 130-373 (YKNRDTICIS…TTVRDTRGSD (244 aa)). Cys137 and Cys378 form a disulfide bridge. [4Fe-4S] cluster contacts are provided by Cys144, Cys148, and Cys151. S-adenosyl-L-methionine contacts are provided by residues 199 to 200 (GE), Ser233, 256 to 258 (SLH), and Asn335. The active-site S-methylcysteine intermediate is the Cys378.

Belongs to the radical SAM superfamily. RlmN family. Requires [4Fe-4S] cluster as cofactor.

It is found in the cytoplasm. The enzyme catalyses adenosine(2503) in 23S rRNA + 2 reduced [2Fe-2S]-[ferredoxin] + 2 S-adenosyl-L-methionine = 2-methyladenosine(2503) in 23S rRNA + 5'-deoxyadenosine + L-methionine + 2 oxidized [2Fe-2S]-[ferredoxin] + S-adenosyl-L-homocysteine. The catalysed reaction is adenosine(37) in tRNA + 2 reduced [2Fe-2S]-[ferredoxin] + 2 S-adenosyl-L-methionine = 2-methyladenosine(37) in tRNA + 5'-deoxyadenosine + L-methionine + 2 oxidized [2Fe-2S]-[ferredoxin] + S-adenosyl-L-homocysteine. In terms of biological role, specifically methylates position 2 of adenine 2503 in 23S rRNA and position 2 of adenine 37 in tRNAs. The sequence is that of Probable dual-specificity RNA methyltransferase RlmN from Kineococcus radiotolerans (strain ATCC BAA-149 / DSM 14245 / SRS30216).